A 147-amino-acid chain; its full sequence is Bis(5'-nucleosyl)-tetraphosphatase [asymmetrical] (147 aa).

The Nudix hydrolase domain occupies 1-139 (MALRACGLII…EMKAALQEGH (139 aa)). N-acetylalanine is present on Ala-2. The short motif at 43 to 64 (GHVEPGEDDLETALRETQEEAG) is the Nudix box element.

Belongs to the Nudix hydrolase family. Requires a divalent metal cation as cofactor.

The catalysed reaction is P(1),P(4)-bis(5'-guanosyl) tetraphosphate + H2O = GMP + GTP + 2 H(+). It catalyses the reaction a 5'-end CoA-ribonucleoside in mRNA + H2O = a 5'-end phospho-adenosine-phospho-ribonucleoside in mRNA + (R)-4'-phosphopantetheine + 2 H(+). It carries out the reaction a 5'-end FAD-phospho-ribonucleoside in mRNA + H2O = a 5'-end phospho-adenosine-phospho-ribonucleoside in mRNA + FMN + 2 H(+). Its function is as follows. Catalyzes the asymmetric hydrolysis of diadenosine 5',5'''-P1,P4-tetraphosphate (Ap4A) to yield AMP and ATP. Exhibits decapping activity towards FAD-capped RNAs and dpCoA-capped RNAs in vitro. In Homo sapiens (Human), this protein is Bis(5'-nucleosyl)-tetraphosphatase [asymmetrical] (NUDT2).